A 1706-amino-acid chain; its full sequence is Bifunctional hemolysin/adenylate cyclase (1706 aa).

Residues 1–399 (MQQSHQAGYA…RRPSLGAVER (399 aa)) are a, catalytic. Residue 349–356 (AYGVAGKS) participates in ATP binding. Residues 367-405 (GVPGGRSKSSPDVLETVPASPGLRRPSLGAVERQDSGYD) form a disordered region. The b, Ala/Gly-rich stretch occupies residues 400-912 (QDSGYDSLDG…LKHSIKLEVI (513 aa)). The segment at 500-698 (LSAAVFGLGE…SVVGAPVAVV (199 aa)) is required for interaction with CyaC. Residues Lys-860 and Lys-983 are each lipidated (N6-palmitoyl lysine). A c region spans residues 913 to 1656 (GGDGDDVVLA…RDADHRVEAI (744 aa)). Hemolysin-type calcium-binding repeat units follow at residues 1014 to 1031 (IGGAGNDSITGNAHDNFL), 1032 to 1049 (AGGAGDDRLDGGAGNDTL), 1050 to 1067 (VGGEGHNTVVGGAGDDVF), 1155 to 1172 (WGDDGNDTIHGRGGDDIL), 1173 to 1190 (RGGLGLDTLYGEDGNDIF), 1279 to 1296 (MGQGGDDTVRGGDGDDLL), 1297 to 1314 (FGGDGNDMLYGDAGNDTL), 1315 to 1332 (YGGLGDDTLEGGAGNDWF), 1335 to 1352 (TPAREHDVLRGGAGVDTV), 1411 to 1428 (TGDAQANVLRGAGGADVL), 1429 to 1446 (AGGEGDDVLLGGDGDDQL), 1447 to 1464 (SGDAGRDRLYGEAGDDWF), 1468 to 1484 (AANAGNLLDGGDGNDTV), 1537 to 1554 (IGDAGANVLNGLAGNDVL), 1555 to 1572 (SGGAGDDVLLGDEGSDLL), 1573 to 1590 (SGDAGNDDLFGGQGDDTY), and 1603 to 1620 (ESGGGHDTIRINAGADQL). Residues 1657-1706 (HAANQAIDPAGIEKLVEAMAQYPDPGAAAAAPPAARVPDTLMQSLAVNWR) form a d, Asp/Gly-rich region.

It in the N-terminal section; belongs to the adenylyl cyclase class-2 family. In the C-terminal section; belongs to the RTX prokaryotic toxin family. In terms of processing, released in a processed form. Palmitoylated at Lys-860 and Lys-983 by CyaC. The toxin only becomes active when modified in position Lys-983: palmitoylation is required for efficient membrane insertion and pore formation of the acylated Hemolysin chain.

It localises to the secreted. Its subcellular location is the host cell membrane. The enzyme catalyses ATP = 3',5'-cyclic AMP + diphosphate. With respect to regulation, activated by host calmodulin. Functionally, bifunctional adenylate cyclase toxin-hemolysin that plays a crucial role in host colonization. It causes whooping cough by acting on mammalian cells by elevating cAMP-concentration and thus disrupts normal cell function. Its function is as follows. Adenylate cyclase that is activated by host intracellular calmodulin and catalyzes un-regulated conversion of ATP to cAMP, thereby impairing microbicidal functions of immune effector cells and inducing apoptosis of lung macrophages. Hemolysin that forms small cation-selective membrane channels, leading to hemolytic activity. The hemolytic activity of CyaA is weak compared with that of the HlyA of E.coli. The sequence is that of Bifunctional hemolysin/adenylate cyclase (cya) from Bordetella bronchiseptica (strain ATCC BAA-588 / NCTC 13252 / RB50) (Alcaligenes bronchisepticus).